A 526-amino-acid chain; its full sequence is Secreted triacylglycerol lipase LIP4 (526 aa).

An N-terminal signal peptide occupies residues 1 to 26 (MVRLSYVRFGVAWCIAIIIVSGFSNA). An N-linked (GlcNAc...) asparagine glycan is attached at Asn186. Ser195 functions as the Nucleophile in the catalytic mechanism. Asn228 carries N-linked (GlcNAc...) asparagine glycosylation. Residues Asp342 and His376 contribute to the active site. An N-linked (GlcNAc...) asparagine glycan is attached at Asn377. A disordered region spans residues 412 to 526 (TGPSASSSAG…TMPAPPLMER (115 aa)). Composition is skewed to low complexity over residues 413-423 (GPSASSSAGGP) and 430-457 (TGGH…HAPA). Residue Asn462 is glycosylated (N-linked (GlcNAc...) asparagine). The segment covering 480-490 (PSTGATSPAPS) has biased composition (low complexity). Over residues 516–526 (RTMPAPPLMER) the composition is skewed to pro residues.

Belongs to the AB hydrolase superfamily. Lipase family. Class Lip subfamily.

It is found in the secreted. It catalyses the reaction a triacylglycerol + H2O = a diacylglycerol + a fatty acid + H(+). The enzyme catalyses a monoacylglycerol + H2O = glycerol + a fatty acid + H(+). It carries out the reaction a diacylglycerol + H2O = a monoacylglycerol + a fatty acid + H(+). Functionally, secreted lipase that hydrolyzes acylglycerol lipids such as triacylglycerols and consequently releases free fatty acid. Can hydrolyze 4-nitrophenyl palmitate to release 4-nitrophenol and palmitoic acid. Due to an absence of fatty acid synthase genes in Malassezia species, secretory lipases are essential for the yeast to generate free fatty acids from degradation of sebum and assimilate them as lipid sources for growth. Plays important roles not only in lipid metabolism but also in the immune response of host cells and pathogenesis. This is Secreted triacylglycerol lipase LIP4 from Malassezia furfur (Pityriasis versicolor infection agent).